Reading from the N-terminus, the 330-residue chain is D-alanine--D-alanine ligase (330 aa).

Residues N122–R323 form the ATP-grasp domain. T151–T206 is a binding site for ATP. Mg(2+)-binding residues include D277, E290, and N292.

Belongs to the D-alanine--D-alanine ligase family. It depends on Mg(2+) as a cofactor. The cofactor is Mn(2+).

Its subcellular location is the cytoplasm. The catalysed reaction is 2 D-alanine + ATP = D-alanyl-D-alanine + ADP + phosphate + H(+). The protein operates within cell wall biogenesis; peptidoglycan biosynthesis. In terms of biological role, cell wall formation. This is D-alanine--D-alanine ligase from Porphyromonas gingivalis (strain ATCC 33277 / DSM 20709 / CIP 103683 / JCM 12257 / NCTC 11834 / 2561).